The primary structure comprises 457 residues: Putative F-box protein At3g58860 (457 aa).

Residues 6 to 54 (MDLFSKLPDEVISHILSSLPTKEAASTSVLAKKWRYLFAFVPSLDFNDS) enclose the F-box domain.

The sequence is that of Putative F-box protein At3g58860 from Arabidopsis thaliana (Mouse-ear cress).